The following is a 417-amino-acid chain: Gamma-glutamyl phosphate reductase (417 aa).

It belongs to the gamma-glutamyl phosphate reductase family.

The protein localises to the cytoplasm. It carries out the reaction L-glutamate 5-semialdehyde + phosphate + NADP(+) = L-glutamyl 5-phosphate + NADPH + H(+). The protein operates within amino-acid biosynthesis; L-proline biosynthesis; L-glutamate 5-semialdehyde from L-glutamate: step 2/2. Its function is as follows. Catalyzes the NADPH-dependent reduction of L-glutamate 5-phosphate into L-glutamate 5-semialdehyde and phosphate. The product spontaneously undergoes cyclization to form 1-pyrroline-5-carboxylate. The protein is Gamma-glutamyl phosphate reductase of Proteus mirabilis (strain HI4320).